A 100-amino-acid chain; its full sequence is MATKLVESEIENKLEALNALITDDTPWERSGDSIKKTFTFKSFIRAFGWMSQMAIWAEKLKHHPEWFNVYNKVEVTLTTHDAGGLTELDFSLAEKMEKFK.

This sequence belongs to the pterin-4-alpha-carbinolamine dehydratase family.

The enzyme catalyses (4aS,6R)-4a-hydroxy-L-erythro-5,6,7,8-tetrahydrobiopterin = (6R)-L-erythro-6,7-dihydrobiopterin + H2O. This is Putative pterin-4-alpha-carbinolamine dehydratase from Alteromonas mediterranea (strain DSM 17117 / CIP 110805 / LMG 28347 / Deep ecotype).